We begin with the raw amino-acid sequence, 656 residues long: MSNTLAVISNKLEVMMKYYHDISNLGIRLYKTTKALVSFDLGEVFKIWFCDKNFKDLKKIDQSVIYTQYLETVLSKIAATGKYQDKHISHSQWINCFETINNYDDFLHTKLKKLIGIKNKNIIDSILDDIGDINSLEFNIIFSKVQVFLSDNLDKFENLVQVAKKIDSIVYPLTREYFLYRYLAKSILVAKTLSLHSYSEAEFNIVKKTHLNFTNYLNSLEQSLTKIEKATNKYNEEHKIASWLTAKSDLVSNHSGKIAATYATLVGGVIALRSYVIDEKDPWYELCALPSTILAMLQILASFPGTVLSNRQTKEINNNMFQELKNSDQNAQDIKFLFDCTPSFANDPINTAASCFRYASNLGLQPIDLLNNDIVNRIILYTALRWSAVAGVVEEQSKVTNFMQTKLIKFLHHEIVPALIENKKFTSKEIKPYFYLLYKHSAQDRNTQIKLQTIYHKLTNEDIDLNNIKLDINTYYGWKSVVMCSAMTTLILDYICFYFRNQELAFYEDPMFYASTSVKFMRLASLLVSTYYGNKLIENITGEKLAHDMFFQKFYYNDAARLTVAIVPLIMFESIKDLKLLSLATLIDVLTTAISDLNVGNAISSAGKNIAEKTATTLTWLNKIASGTNDDTNDDIVIDIAHTEELQPLGCVDISD.

This is an uncharacterized protein from Rickettsia prowazekii (strain Madrid E).